The chain runs to 440 residues: Thymidine phosphorylase (440 aa).

The protein belongs to the thymidine/pyrimidine-nucleoside phosphorylase family. As to quaternary structure, homodimer.

The catalysed reaction is thymidine + phosphate = 2-deoxy-alpha-D-ribose 1-phosphate + thymine. Its pathway is pyrimidine metabolism; dTMP biosynthesis via salvage pathway; dTMP from thymine: step 1/2. Its function is as follows. The enzymes which catalyze the reversible phosphorolysis of pyrimidine nucleosides are involved in the degradation of these compounds and in their utilization as carbon and energy sources, or in the rescue of pyrimidine bases for nucleotide synthesis. The polypeptide is Thymidine phosphorylase (Burkholderia pseudomallei (strain K96243)).